The primary structure comprises 251 residues: NAD kinase (251 aa).

Aspartate 51 (proton acceptor) is an active-site residue. NAD(+)-binding positions include 51–52 (DG), lysine 56, 113–114 (NE), lysine 124, histidine 140, aspartate 142, 153–158 (TGYSLS), and alanine 177.

This sequence belongs to the NAD kinase family. The cofactor is a divalent metal cation.

It localises to the cytoplasm. The catalysed reaction is NAD(+) + ATP = ADP + NADP(+) + H(+). Involved in the regulation of the intracellular balance of NAD and NADP, and is a key enzyme in the biosynthesis of NADP. Catalyzes specifically the phosphorylation on 2'-hydroxyl of the adenosine moiety of NAD to yield NADP. This chain is NAD kinase, found in Thermosipho melanesiensis (strain DSM 12029 / CIP 104789 / BI429).